The chain runs to 399 residues: S-adenosylmethionine synthase (399 aa).

135–140 (GEGSTD) serves as a coordination point for ATP.

The protein belongs to the AdoMet synthase 2 family. The cofactor is Mg(2+).

The catalysed reaction is L-methionine + ATP + H2O = S-adenosyl-L-methionine + phosphate + diphosphate. It functions in the pathway amino-acid biosynthesis; S-adenosyl-L-methionine biosynthesis; S-adenosyl-L-methionine from L-methionine: step 1/1. Functionally, catalyzes the formation of S-adenosylmethionine from methionine and ATP. The sequence is that of S-adenosylmethionine synthase (mat) from Archaeoglobus fulgidus (strain ATCC 49558 / DSM 4304 / JCM 9628 / NBRC 100126 / VC-16).